Here is a 532-residue protein sequence, read N- to C-terminus: FRIGIDA-like protein 4a (532 aa).

The disordered stretch occupies residues 406-432 (KTEKRKPAAVPANKRTRASYNGPMPPA).

The protein belongs to the Frigida family. As to expression, expressed in leaves, shoot apex, flowers and during seed development.

The chain is FRIGIDA-like protein 4a (FRL4A) from Arabidopsis thaliana (Mouse-ear cress).